The primary structure comprises 179 residues: Large ribosomal subunit protein uL6 (179 aa).

Over residues 154–169 (EPYKGKGVKYEHEQIR) the composition is skewed to basic and acidic residues. The interval 154–179 (EPYKGKGVKYEHEQIRRKAGKSGGKK) is disordered. Basic residues predominate over residues 170–179 (RKAGKSGGKK).

This sequence belongs to the universal ribosomal protein uL6 family. As to quaternary structure, part of the 50S ribosomal subunit.

Functionally, this protein binds to the 23S rRNA, and is important in its secondary structure. It is located near the subunit interface in the base of the L7/L12 stalk, and near the tRNA binding site of the peptidyltransferase center. This chain is Large ribosomal subunit protein uL6, found in Oleidesulfovibrio alaskensis (strain ATCC BAA-1058 / DSM 17464 / G20) (Desulfovibrio alaskensis).